The chain runs to 387 residues: 3-ketoacyl-CoA thiolase (387 aa).

Cysteine 91 functions as the Acyl-thioester intermediate in the catalytic mechanism. Catalysis depends on proton acceptor residues histidine 343 and cysteine 373.

Belongs to the thiolase-like superfamily. Thiolase family. Heterotetramer of two alpha chains (FadB) and two beta chains (FadA).

It localises to the cytoplasm. The enzyme catalyses an acyl-CoA + acetyl-CoA = a 3-oxoacyl-CoA + CoA. It functions in the pathway lipid metabolism; fatty acid beta-oxidation. Functionally, catalyzes the final step of fatty acid oxidation in which acetyl-CoA is released and the CoA ester of a fatty acid two carbons shorter is formed. The protein is 3-ketoacyl-CoA thiolase of Aliivibrio fischeri (strain ATCC 700601 / ES114) (Vibrio fischeri).